Consider the following 204-residue polypeptide: FMN-dependent NADH:quinone oxidoreductase (204 aa).

Residues Ser9, 15–17, and 97–100 each bind FMN; these read SVS and MYNF.

The protein belongs to the azoreductase type 1 family. Homodimer. The cofactor is FMN.

The catalysed reaction is 2 a quinone + NADH + H(+) = 2 a 1,4-benzosemiquinone + NAD(+). The enzyme catalyses N,N-dimethyl-1,4-phenylenediamine + anthranilate + 2 NAD(+) = 2-(4-dimethylaminophenyl)diazenylbenzoate + 2 NADH + 2 H(+). Functionally, quinone reductase that provides resistance to thiol-specific stress caused by electrophilic quinones. Its function is as follows. Also exhibits azoreductase activity. Catalyzes the reductive cleavage of the azo bond in aromatic azo compounds to the corresponding amines. The polypeptide is FMN-dependent NADH:quinone oxidoreductase (Methylobacterium radiotolerans (strain ATCC 27329 / DSM 1819 / JCM 2831 / NBRC 15690 / NCIMB 10815 / 0-1)).